Reading from the N-terminus, the 402-residue chain is Phosphoglycerate kinase (402 aa).

Substrate-binding positions include 24 to 26 (DLN), Arg39, 62 to 65 (HLGR), Arg121, and Arg161. ATP is bound by residues Lys211, Gly299, Glu330, and 359–362 (GGDS).

It belongs to the phosphoglycerate kinase family. As to quaternary structure, monomer.

The protein localises to the cytoplasm. It carries out the reaction (2R)-3-phosphoglycerate + ATP = (2R)-3-phospho-glyceroyl phosphate + ADP. The protein operates within carbohydrate degradation; glycolysis; pyruvate from D-glyceraldehyde 3-phosphate: step 2/5. The polypeptide is Phosphoglycerate kinase (Corynebacterium urealyticum (strain ATCC 43042 / DSM 7109)).